Here is a 427-residue protein sequence, read N- to C-terminus: Peptidase B (427 aa).

Residues lysine 195 and aspartate 200 each coordinate Mn(2+). The active site involves lysine 207. Residues aspartate 218, aspartate 277, and glutamate 279 each coordinate Mn(2+). Residue arginine 281 is part of the active site.

Belongs to the peptidase M17 family. Homohexamer. Mn(2+) is required as a cofactor.

It localises to the cytoplasm. The catalysed reaction is Release of an N-terminal amino acid, Xaa, from a peptide or arylamide. Xaa is preferably Glu or Asp but may be other amino acids, including Leu, Met, His, Cys and Gln.. Functionally, probably plays an important role in intracellular peptide degradation. The sequence is that of Peptidase B from Escherichia coli (strain UTI89 / UPEC).